A 943-amino-acid chain; its full sequence is UvrABC system protein A (943 aa).

32–39 contacts ATP; that stretch reads GLSGSGKS. The segment at 251 to 278 adopts a C4-type zinc-finger fold; that stretch reads CPVCGFTVPELEPRLFSFNAPFGSCPTC. ABC transporter domains lie at 308–589 and 609–937; these read WNPI…KKSI and GSGR…QYLK. ATP is bound at residue 641 to 648; sequence GVSGSGKS. Residues 740–766 form a C4-type zinc finger; the sequence is CEACSGDGIIKIEMHFLPDVYVPCEVC.

It belongs to the ABC transporter superfamily. UvrA family. As to quaternary structure, forms a heterotetramer with UvrB during the search for lesions.

It is found in the cytoplasm. In terms of biological role, the UvrABC repair system catalyzes the recognition and processing of DNA lesions. UvrA is an ATPase and a DNA-binding protein. A damage recognition complex composed of 2 UvrA and 2 UvrB subunits scans DNA for abnormalities. When the presence of a lesion has been verified by UvrB, the UvrA molecules dissociate. The sequence is that of UvrABC system protein A from Streptococcus mutans serotype c (strain ATCC 700610 / UA159).